The sequence spans 302 residues: Galactofuranosyltransferase GlfT1 (302 aa).

This sequence belongs to the glycosyltransferase 2 family.

Its subcellular location is the cell membrane. It localises to the secreted. The protein localises to the cell wall. The catalysed reaction is alpha-L-rhamnosyl-(1-&gt;3)-N-acetyl-alpha-D-glucosaminyl-diphospho-trans,octa-cis-decaprenol + 2 UDP-alpha-D-galactofuranose = beta-D-galactofuranosyl-(1-&gt;5)-beta-D-galactofuranosyl-(1-&gt;4)-alpha-L-rhamnosyl-(1-&gt;3)-N-acetyl-alpha-D-glucosaminyl-diphospho-trans,octa-cis-decaprenol + 2 UDP + 2 H(+). The protein operates within cell wall biogenesis; cell wall polysaccharide biosynthesis. Functionally, involved in the biosynthesis of the arabinogalactan (AG) region of the mycolylarabinogalactan-peptidoglycan (mAGP) complex, an essential component of the mycobacterial cell wall. Catalyzes the transfer of the first two galactofuranosyl (Galf) units from UDP-galactofuranose (UDP-Galf) onto the rhamnosyl-GlcNAc-diphospho-decaprenol (Rha-GlcNAc-PP-C50) acceptor, yielding galactofuranosyl-galactofuranosyl-rhamnosyl-GlcNAc-diphospho-decaprenol (Galf-Galf-Rha-GlcNAc-PP-C50). Thus, GlfT1 is the initiator of galactan synthesis, while GlfT2 continues with the subsequent polymerization events. The protein is Galactofuranosyltransferase GlfT1 of Mycolicibacterium smegmatis (strain ATCC 700084 / mc(2)155) (Mycobacterium smegmatis).